A 360-amino-acid polypeptide reads, in one-letter code: 3-dehydroquinate synthase (360 aa).

Residues 72–77 (DGEEYK), 106–110 (GVIGD), 130–131 (TT), Lys143, and Lys152 each bind NAD(+). Positions 185, 248, and 265 each coordinate Zn(2+).

It belongs to the sugar phosphate cyclases superfamily. Dehydroquinate synthase family. Requires Co(2+) as cofactor. Zn(2+) is required as a cofactor. The cofactor is NAD(+).

It is found in the cytoplasm. It carries out the reaction 7-phospho-2-dehydro-3-deoxy-D-arabino-heptonate = 3-dehydroquinate + phosphate. The protein operates within metabolic intermediate biosynthesis; chorismate biosynthesis; chorismate from D-erythrose 4-phosphate and phosphoenolpyruvate: step 2/7. Functionally, catalyzes the conversion of 3-deoxy-D-arabino-heptulosonate 7-phosphate (DAHP) to dehydroquinate (DHQ). This chain is 3-dehydroquinate synthase, found in Geotalea uraniireducens (strain Rf4) (Geobacter uraniireducens).